The following is an 878-amino-acid chain: Protein daughter of sevenless (878 aa).

One can recognise a PH domain in the interval 3–113 (RTFYEGWLIK…WVNCICQVCH (111 aa)). A disordered region spans residues 132-176 (ENRTQHTSSSGGLSNSTQNTTTTSLHSSAGTTAPQASVPNAGGSA). Residues 136–159 (QHTSSSGGLSNSTQNTTTTSLHSS) show a composition bias toward low complexity. The segment covering 160-169 (AGTTAPQASV) has biased composition (polar residues). Residues 246–275 (ALIQAQAAAAAAEQLQQQQQQAARLAVSAN) adopt a coiled-coil conformation. The interval 391–437 (NNNASKQRSDSDSESVFTDDDEWAHPLPLRENVDRSTRPSDSSIENE) is disordered. Position 399 is a phosphoserine (serine 399). Threonine 481 carries the post-translational modification Phosphothreonine. 2 interaction with DRK regions span residues 638–650 (DCPP…KPKV) and 690–702 (GPPS…KPNA). Disordered regions lie at residues 686–721 (QQPI…SSGA) and 749–773 (LPRQ…RTAS). Polar residues-rich tracts occupy residues 707–718 (NSATMSPATRRS) and 760–770 (SPGSMSVQHQR). Threonine 771 is subject to Phosphothreonine. Phosphotyrosine occurs at positions 801 and 854.

As to quaternary structure, interacts with DRK. Post-translationally, phosphorylated on Tyr-801 and Tyr-854 in response to sevenless activation, which initiates the recruitment of the phosphatase CSW.

Its subcellular location is the cytoplasm. The protein resides in the membrane. In terms of biological role, essential component for signaling from various receptor tyrosine kinases such as Sevenless, TORSO and DER. Required for photoreceptor cell and wing development. The polypeptide is Protein daughter of sevenless (dos) (Drosophila melanogaster (Fruit fly)).